The primary structure comprises 380 residues: 1-deoxy-D-xylulose 5-phosphate reductoisomerase (380 aa).

Threonine 10, glycine 11, serine 12, isoleucine 13, glycine 36, arginine 37, asparagine 38, and asparagine 120 together coordinate NADPH. Lysine 121 serves as a coordination point for 1-deoxy-D-xylulose 5-phosphate. Residue glutamate 122 coordinates NADPH. Aspartate 146 is a Mn(2+) binding site. 1-deoxy-D-xylulose 5-phosphate-binding residues include serine 147, glutamate 148, serine 172, and histidine 195. Position 148 (glutamate 148) interacts with Mn(2+). Glycine 201 provides a ligand contact to NADPH. 1-deoxy-D-xylulose 5-phosphate contacts are provided by serine 208, asparagine 213, lysine 214, and glutamate 217. Glutamate 217 lines the Mn(2+) pocket.

Belongs to the DXR family. Mg(2+) is required as a cofactor. Mn(2+) serves as cofactor.

The catalysed reaction is 2-C-methyl-D-erythritol 4-phosphate + NADP(+) = 1-deoxy-D-xylulose 5-phosphate + NADPH + H(+). The protein operates within isoprenoid biosynthesis; isopentenyl diphosphate biosynthesis via DXP pathway; isopentenyl diphosphate from 1-deoxy-D-xylulose 5-phosphate: step 1/6. Its function is as follows. Catalyzes the NADPH-dependent rearrangement and reduction of 1-deoxy-D-xylulose-5-phosphate (DXP) to 2-C-methyl-D-erythritol 4-phosphate (MEP). The chain is 1-deoxy-D-xylulose 5-phosphate reductoisomerase from Listeria monocytogenes serovar 1/2a (strain ATCC BAA-679 / EGD-e).